The sequence spans 213 residues: LexA repressor (213 aa).

Residues 31–51 (RAEISRELGFRSPNAAEEYLK) constitute a DNA-binding region (H-T-H motif). Catalysis depends on for autocatalytic cleavage activity residues Ser-129 and Lys-166.

It belongs to the peptidase S24 family. In terms of assembly, homodimer.

The catalysed reaction is Hydrolysis of Ala-|-Gly bond in repressor LexA.. Represses a number of genes involved in the response to DNA damage (SOS response), including recA and lexA. In the presence of single-stranded DNA, RecA interacts with LexA causing an autocatalytic cleavage which disrupts the DNA-binding part of LexA, leading to derepression of the SOS regulon and eventually DNA repair. The polypeptide is LexA repressor (Mannheimia succiniciproducens (strain KCTC 0769BP / MBEL55E)).